Reading from the N-terminus, the 223-residue chain is Homeobox protein egl-5 (223 aa).

Over residues 1–25 the composition is skewed to low complexity; sequence MNTSTSAFDFGSSTASSAATSTTSS. Disordered regions lie at residues 1-58 and 168-191; these read MNTS…STEA and KKEK…PPKG. The homeobox DNA-binding region spans 112 to 171; that stretch reads SKKGRQTYQRYQTSVLEAKFQQSSYVSKKQREELRLQTQLTDRQIKIWFQNRRMKAKKEK.

The protein belongs to the Abd-B homeobox family. Interacts with the TCF transcription factor pop-1.

It localises to the nucleus. Involved in control of cell fate and pattern formation along the anterior-posterior axis, acting mainly in the tail. Required during embryonic and postembryonic development. Essential for the determination of specific neurons, including the PLM touch neurons. Plays a role in neural fate specification in the hermaphrodite-specific neuron (HSN)/PHB neuron lineage, acting in concert with T-box protein tbx-2 and the asymmetric cell division protein ham-1. Required for male gonadal fate determination, acting in parallel with a WNT/beta-catenin pathway, perhaps by recruiting pop-1 to male-specific gonadal target genes. Involved in development of the hermaphrodite hindgut, and for the response to rectal infection by the coryneform bacterium M.nematophilum. This Caenorhabditis elegans protein is Homeobox protein egl-5.